The sequence spans 265 residues: H-2 class II histocompatibility antigen, A-Q beta chain (265 aa).

The N-terminal stretch at 1–27 (MALQIPSLLLSAAVVVLMVLSSPRTEG) is a signal peptide. Positions 28 to 122 (GNSERHFVAQ…VETHTSLRRL (95 aa)) are beta-1. Residues 28–227 (GNSERHFVAQ…AQSESARSKM (200 aa)) lie on the Extracellular side of the membrane. 2 disulfide bridges follow: Cys42/Cys106 and Cys145/Cys201. Residue Asn46 is glycosylated (N-linked (GlcNAc...) asparagine). The tract at residues 123 to 217 (EQPNVAISLS…LKSPITVEWR (95 aa)) is beta-2. The region spanning 125–213 (PNVAISLSRT…EHPSLKSPIT (89 aa)) is the Ig-like C1-type domain. The tract at residues 218-227 (AQSESARSKM) is connecting peptide. Residues 228–247 (LSGIGGCVLGVIFLGLGLFI) traverse the membrane as a helical segment. Residues 248–265 (RHRSQKGPRGPPPAGLLQ) are Cytoplasmic-facing.

The protein belongs to the MHC class II family. In terms of processing, ubiquitinated in immature dendritic cells leading to down-regulation of MHC class II.

The protein resides in the membrane. This chain is H-2 class II histocompatibility antigen, A-Q beta chain (H2-Ab1), found in Mus musculus (Mouse).